The primary structure comprises 346 residues: MIILGFESSCDETGVAAVCTERGLLAHALHTQIAMHQEYGGVVPELASRDHIRRVVPLTRQVLAEAGLTLADVGAVAYTAGPGLAGALLVGASVAQALAWSRALPAIGIHHLEGHLLSPLLAEPRPEFPFVALLVSGGHTQLMRVDGVGRYELLGETLDDAAGEAFDKSAKLMGLGYPGGSALARLAEQGDASRYDLPRPMLHSGDLDFSFSGLKTAVLTRVKAATRDGGELGEQDRADLAAATQAAIVEVLAAKAIRALKQTGLRRLVVAGGVGANALLRAHLARALKPLRAEAYFPPLSLCTDNGAMIAFAAAERVKAGLADLREGDHAFTVRPRWDLADIQAG.

His111 and His115 together coordinate Fe cation. Substrate-binding positions include 134 to 138 (LVSGG), Asp167, Gly180, and Asn277. Fe cation is bound at residue Asp305.

The protein belongs to the KAE1 / TsaD family. The cofactor is Fe(2+).

Its subcellular location is the cytoplasm. The catalysed reaction is L-threonylcarbamoyladenylate + adenosine(37) in tRNA = N(6)-L-threonylcarbamoyladenosine(37) in tRNA + AMP + H(+). Functionally, required for the formation of a threonylcarbamoyl group on adenosine at position 37 (t(6)A37) in tRNAs that read codons beginning with adenine. Is involved in the transfer of the threonylcarbamoyl moiety of threonylcarbamoyl-AMP (TC-AMP) to the N6 group of A37, together with TsaE and TsaB. TsaD likely plays a direct catalytic role in this reaction. The protein is tRNA N6-adenosine threonylcarbamoyltransferase of Bordetella parapertussis (strain 12822 / ATCC BAA-587 / NCTC 13253).